Consider the following 78-residue polypeptide: Large ribosomal subunit protein bL31 (78 aa).

It belongs to the bacterial ribosomal protein bL31 family. Type A subfamily. Part of the 50S ribosomal subunit.

Its function is as follows. Binds the 23S rRNA. This chain is Large ribosomal subunit protein bL31 (rpmE), found in Rickettsia typhi (strain ATCC VR-144 / Wilmington).